We begin with the raw amino-acid sequence, 918 residues long: UPF0182 protein CPF_0011 (918 aa).

The next 7 helical transmembrane spans lie at 8–28 (TVLISILLLVVVFFVSTNFII), 46–66 (LIAICKLFVPIFILYFCVIAI), 91–111 (FLLSNLVISILGAGATATTQW), 151–171 (AISLIIILVLITVIIYLALGF), 200–220 (LAVLASVLSLLIGCSYLLKSY), 243–263 (IFYKVIAVACVISSIVVFISI), and 271–291 (IIISIASIAVLIVLEPVVAIF). The segment covering 857 to 869 (EENKNSNKDETPK) has biased composition (basic and acidic residues). The segment at 857 to 876 (EENKNSNKDETPKNEITSDN) is disordered.

This sequence belongs to the UPF0182 family.

The protein localises to the cell membrane. The chain is UPF0182 protein CPF_0011 from Clostridium perfringens (strain ATCC 13124 / DSM 756 / JCM 1290 / NCIMB 6125 / NCTC 8237 / Type A).